A 355-amino-acid chain; its full sequence is UDP-3-O-acylglucosamine N-acyltransferase (355 aa).

H246 serves as the catalytic Proton acceptor.

This sequence belongs to the transferase hexapeptide repeat family. LpxD subfamily. As to quaternary structure, homotrimer.

It catalyses the reaction a UDP-3-O-[(3R)-3-hydroxyacyl]-alpha-D-glucosamine + a (3R)-hydroxyacyl-[ACP] = a UDP-2-N,3-O-bis[(3R)-3-hydroxyacyl]-alpha-D-glucosamine + holo-[ACP] + H(+). Its pathway is bacterial outer membrane biogenesis; LPS lipid A biosynthesis. Its function is as follows. Catalyzes the N-acylation of UDP-3-O-acylglucosamine using 3-hydroxyacyl-ACP as the acyl donor. Is involved in the biosynthesis of lipid A, a phosphorylated glycolipid that anchors the lipopolysaccharide to the outer membrane of the cell. The polypeptide is UDP-3-O-acylglucosamine N-acyltransferase (Polaromonas naphthalenivorans (strain CJ2)).